The following is a 296-amino-acid chain: N-acetylmuramic acid 6-phosphate etherase (296 aa).

One can recognise an SIS domain in the interval 54-217 (VISCFQKGGR…STASMVGIGK (164 aa)). Residue Glu-82 is the Proton donor of the active site. Glu-113 is an active-site residue.

The protein belongs to the GCKR-like family. MurNAc-6-P etherase subfamily. In terms of assembly, homodimer.

It catalyses the reaction N-acetyl-D-muramate 6-phosphate + H2O = N-acetyl-D-glucosamine 6-phosphate + (R)-lactate. Its pathway is amino-sugar metabolism; N-acetylmuramate degradation. Specifically catalyzes the cleavage of the D-lactyl ether substituent of MurNAc 6-phosphate, producing GlcNAc 6-phosphate and D-lactate. The sequence is that of N-acetylmuramic acid 6-phosphate etherase from Listeria monocytogenes serotype 4b (strain CLIP80459).